Consider the following 1233-residue polypeptide: Structural maintenance of chromosomes protein 1A (1233 aa).

Residue 32–39 (GPNGSGKS) participates in ATP binding. 2 coiled-coil regions span residues 104–124 (EYKI…LEKL) and 163–503 (ELAQ…KAEI). Basic and acidic residues predominate over residues 284-293 (IKEKDSELNQ). Disordered stretches follow at residues 284 to 308 (IKEK…TSHK) and 348 to 369 (QEFE…TLEE). Ser358 and Ser360 each carry phosphoserine. An SMC hinge domain is found at 515–629 (VYGRLIDLCQ…DNVEDARRIA (115 aa)). An N6-acetyllysine mark is found at Lys648 and Lys713. A coiled-coil region spans residues 660-935 (KAKARRWDEK…RHNLLQACKM (276 aa)). The disordered stretch occupies residues 947 to 966 (MDDISQEEGSSQGEDSVSGS). The segment covering 953-966 (EEGSSQGEDSVSGS) has biased composition (low complexity). Residue Ser957 is modified to Phosphoserine; by ATM. Ser962 carries the phosphoserine modification. Ser966 is modified (phosphoserine; by ATM and ATR). Ser970 bears the Phosphoserine mark. A coiled-coil region spans residues 991 to 1068 (KDAQAEEEIK…FEQIKKERFD (78 aa)). Lys1037 carries the post-translational modification N6-acetyllysine.

Belongs to the SMC family. SMC1 subfamily. As to quaternary structure, forms a heterodimer with SMC3 in cohesin complexes. Cohesin complexes are composed of the SMC1 (SMC1A or SMC1B) and SMC3 heterodimer attached via their SMC hinge domain, RAD21 which link them, and one STAG protein (STAG1, STAG2 or STAG3), which interacts with RAD21. In germ cell cohesin complexes, SMC1A is mutually exclusive with SMC1B. Interacts with BRCA1. Found in a complex with CDCA5, SMC3 and RAD21, PDS5A/SCC-112 and PDS5B/APRIN. Interacts with NDC80. Interacts with BRAT1. Found in a complex containing POLE and SMC3. Interacts with RPGR, STAG3 and SYCP2. The cohesin complex interacts with the cohesin loading complex subunits NIPBL/Scc2 (via HEAT repeats) and MAU2/Scc4. NIPBL directly contacts all members of the complex, RAD21, SMC1A/B, SMC3 and STAG1. Ubiquitinated by the DCX(DCAF15) complex, leading to its degradation. In terms of processing, phosphorylated by ATM upon ionizing radiation in a NBS1-dependent manner. Phosphorylated by ATR upon DNA methylation in a MSH2/MSH6-dependent manner. Phosphorylation of Ser-957 and Ser-966 activates it and is required for S-phase checkpoint activation.

The protein resides in the nucleus. The protein localises to the chromosome. It localises to the centromere. Its subcellular location is the kinetochore. Functionally, involved in chromosome cohesion during cell cycle and in DNA repair. Central component of cohesin complex. The cohesin complex is required for the cohesion of sister chromatids after DNA replication. The cohesin complex apparently forms a large proteinaceous ring within which sister chromatids can be trapped. At anaphase, the complex is cleaved and dissociates from chromatin, allowing sister chromatids to segregate. The cohesin complex may also play a role in spindle pole assembly during mitosis. Involved in DNA repair via its interaction with BRCA1 and its related phosphorylation by ATM, or via its phosphorylation by ATR. Works as a downstream effector both in the ATM/NBS1 branch and in the ATR/MSH2 branch of S-phase checkpoint. This Homo sapiens (Human) protein is Structural maintenance of chromosomes protein 1A (SMC1A).